We begin with the raw amino-acid sequence, 449 residues long: Glucose-6-phosphate isomerase (449 aa).

Glutamate 291 functions as the Proton donor in the catalytic mechanism. Catalysis depends on residues histidine 312 and lysine 426.

Belongs to the GPI family.

The protein localises to the cytoplasm. The catalysed reaction is alpha-D-glucose 6-phosphate = beta-D-fructose 6-phosphate. Its pathway is carbohydrate biosynthesis; gluconeogenesis. It functions in the pathway carbohydrate degradation; glycolysis; D-glyceraldehyde 3-phosphate and glycerone phosphate from D-glucose: step 2/4. Its function is as follows. Catalyzes the reversible isomerization of glucose-6-phosphate to fructose-6-phosphate. This Streptococcus pyogenes serotype M1 protein is Glucose-6-phosphate isomerase.